The chain runs to 325 residues: Thioredoxin reductase (325 aa).

Residues 10 to 13, 39 to 40, Q44, N53, V86, C143, D286, and 293 to 295 each bind FAD; these read SGPS, IA, and RQA. C140 and C143 are disulfide-bonded.

The protein belongs to the class-II pyridine nucleotide-disulfide oxidoreductase family. As to quaternary structure, homodimer. FAD is required as a cofactor.

Its subcellular location is the cytoplasm. The enzyme catalyses [thioredoxin]-dithiol + NADP(+) = [thioredoxin]-disulfide + NADPH + H(+). The protein is Thioredoxin reductase (TRR1) of Pneumocystis carinii.